A 60-amino-acid polypeptide reads, in one-letter code: Cytotoxin 5 (60 aa).

4 cysteine pairs are disulfide-bonded: C3-C21, C14-C38, C42-C53, and C54-C59.

This sequence belongs to the three-finger toxin family. Short-chain subfamily. Type IA cytotoxin sub-subfamily. As to quaternary structure, monomer in solution; Homodimer and oligomer in the presence of negatively charged lipids forming a pore with a size ranging between 20 and 30 Angstroms. In terms of tissue distribution, expressed by the venom gland.

The protein localises to the secreted. It is found in the target cell membrane. Basic protein that binds to cell membrane and depolarizes cardiomyocytes. It also possesses lytic activity on many other cells, including red blood cells. Interaction with sulfatides in the cell membrane induces pore formation and cell internalization and is responsible for cytotoxicity in cardiomyocytes. It targets the mitochondrial membrane and induces mitochondrial swelling and fragmentation. Inhibits protein kinases C. It binds to the integrin alpha-V/beta-3 with a moderate affinity. Is cardiotoxic and cytocidal to Yoshida sarcoma cells. The polypeptide is Cytotoxin 5 (Naja atra (Chinese cobra)).